The primary structure comprises 338 residues: Ribosomal RNA small subunit methyltransferase C (338 aa).

It belongs to the methyltransferase superfamily. RsmC family. Monomer.

The protein resides in the cytoplasm. It carries out the reaction guanosine(1207) in 16S rRNA + S-adenosyl-L-methionine = N(2)-methylguanosine(1207) in 16S rRNA + S-adenosyl-L-homocysteine + H(+). Specifically methylates the guanine in position 1207 of 16S rRNA in the 30S particle. This chain is Ribosomal RNA small subunit methyltransferase C, found in Photorhabdus laumondii subsp. laumondii (strain DSM 15139 / CIP 105565 / TT01) (Photorhabdus luminescens subsp. laumondii).